Consider the following 309-residue polypeptide: Virulence regulon transcriptional activator VirB (309 aa).

The segment at residues 152-171 is a DNA-binding region (H-T-H motif); the sequence is KDIAKKENLSRAKVTRAFQA.

Belongs to the ParB family.

Functionally, transcription activator for the invasion antigens IpaB, IpaC and IpaD. VirB is itself regulated by VirF. The polypeptide is Virulence regulon transcriptional activator VirB (virB) (Shigella flexneri).